The chain runs to 163 residues: 16S rRNA aminocarboxypropyltransferase (163 aa).

Thr-18, Ile-66, Leu-87, and Ser-106 together coordinate S-adenosyl-L-methionine.

It belongs to the TDD superfamily. TSR3 family.

It is found in the cytoplasm. It carries out the reaction an N(1)-methylpseudouridine in rRNA + S-adenosyl-L-methionine = N(1)-methyl-N(3)-[(3S)-3-amino-3-carboxypropyl]pseudouridine in rRNA + S-methyl-5'-thioadenosine + H(+). Its function is as follows. Aminocarboxypropyltransferase that catalyzes the aminocarboxypropyl transfer on pseudouridine corresponding to position 914 in M.jannaschii 16S rRNA. It constitutes the last step in biosynthesis of the hypermodified N1-methyl-N3-(3-amino-3-carboxypropyl) pseudouridine (m1acp3-Psi). In Thermoplasma acidophilum (strain ATCC 25905 / DSM 1728 / JCM 9062 / NBRC 15155 / AMRC-C165), this protein is 16S rRNA aminocarboxypropyltransferase.